The chain runs to 377 residues: tRNA pseudouridine synthase B (377 aa).

Residue D53 is the Nucleophile of the active site.

The protein belongs to the pseudouridine synthase TruB family. Type 1 subfamily.

It carries out the reaction uridine(55) in tRNA = pseudouridine(55) in tRNA. Its function is as follows. Responsible for synthesis of pseudouridine from uracil-55 in the psi GC loop of transfer RNAs. This Tropheryma whipplei (strain Twist) (Whipple's bacillus) protein is tRNA pseudouridine synthase B.